The primary structure comprises 303 residues: MDISDELVAEINELRRRRKAIILSHYYQRPEVQDIADFVGDSLQLSRTAAATEAEVIVFCGVHFMAETAAILSPYKTVVLPDLRAGCPMADMAEVESLRSKKAELGDPVVVSYVNTTADVKAESDICCTSANVVRVIESISPDRRILFVPDRNLGAYAARQTGRELVLWPGFCCVHDDILPEHILRAKRKHPEALVVVHPECRPDVIDLADKVASTSGMVQFVRDSSFREFIIGTEEGITHQMGKLCPGKKFYLPSRGMVCGSMKLITLTKVRDALKRLEPRITVPEHIRYRALQSLERMLAL.

Iminosuccinate is bound by residues H25 and S42. A [4Fe-4S] cluster-binding site is contributed by C87. Residues 113–115 (YVN) and S130 each bind iminosuccinate. C173 serves as a coordination point for [4Fe-4S] cluster. Iminosuccinate-binding positions include 199-201 (HPE) and T216. C261 is a [4Fe-4S] cluster binding site.

It belongs to the quinolinate synthase family. Type 2 subfamily. It depends on [4Fe-4S] cluster as a cofactor.

The protein resides in the cytoplasm. The enzyme catalyses iminosuccinate + dihydroxyacetone phosphate = quinolinate + phosphate + 2 H2O + H(+). Its pathway is cofactor biosynthesis; NAD(+) biosynthesis; quinolinate from iminoaspartate: step 1/1. Its function is as follows. Catalyzes the condensation of iminoaspartate with dihydroxyacetone phosphate to form quinolinate. This Desulforudis audaxviator (strain MP104C) protein is Quinolinate synthase.